The sequence spans 115 residues: Large ribosomal subunit protein P2 (115 aa).

M1 carries the N-acetylmethionine modification. S19 carries the phosphoserine modification. K21 bears the N6-acetyllysine; alternate mark. K21 carries the post-translational modification N6-succinyllysine; alternate. A compositionally biased stretch (low complexity) spans 76 to 90 (APGSAAPAAGSAPAA). Positions 76-115 (APGSAAPAAGSAPAAAEEKKDEKKEESEESDDDMGFGLFD) are disordered. A phosphoserine mark is found at S79 and S86. Over residues 91 to 101 (AEEKKDEKKEE) the composition is skewed to basic and acidic residues. A phosphoserine mark is found at S102 and S105.

Belongs to the eukaryotic ribosomal protein P1/P2 family. In terms of assembly, heterodimer with RPLP1 at the lateral ribosomal stalk of the large ribosomal subunit.

Plays an important role in the elongation step of protein synthesis. The polypeptide is Large ribosomal subunit protein P2 (Rplp2) (Rattus norvegicus (Rat)).